Here is a 357-residue protein sequence, read N- to C-terminus: Gas vesicle ATPase GvpN (357 aa).

Positions 22 to 36 are enriched in polar residues; sequence ATSASKNGGRTTPSA. A disordered region spans residues 22–43; that stretch reads ATSASKNGGRTTPSALTPRPRS. Residue 72–79 coordinates ATP; it reads GPAGTGKT.

It belongs to the CbbQ/NirQ/NorQ/GpvN family. In terms of assembly, forms homodimers, probably interacts with other GV proteins including GvpA.

Its subcellular location is the gas vesicle. It is found in the cytoplasm. The enzyme catalyses ATP + H2O = ADP + phosphate + H(+). Its function is as follows. An ATPase that functions in gas vesicle formation. A minor component of the gas vesicle, also found in soluble extracts. Gas vesicles (GV) are hollow, gas filled proteinaceous nanostructures. During planktonic growth they allow positioning of the organism at a favorable depth for light or nutrient acquisition. This is Gas vesicle ATPase GvpN from Ancylobacter aquaticus.